We begin with the raw amino-acid sequence, 239 residues long: Ribosomal RNA small subunit methyltransferase G (239 aa).

S-adenosyl-L-methionine contacts are provided by residues Gly78, Phe83, 129–130, and Arg148; that span reads AE.

This sequence belongs to the methyltransferase superfamily. RNA methyltransferase RsmG family.

The protein localises to the cytoplasm. Its function is as follows. Specifically methylates the N7 position of a guanine in 16S rRNA. This chain is Ribosomal RNA small subunit methyltransferase G, found in Clostridium beijerinckii (strain ATCC 51743 / NCIMB 8052) (Clostridium acetobutylicum).